The chain runs to 316 residues: Cell division protein ZipA (316 aa).

Residues 1 to 5 are Periplasmic-facing; it reads MQELR. Residues 6 to 26 traverse the membrane as a helical segment; it reads FVLIVVGALAIAALLFHGLWS. Over 27–316 the chain is Cytoplasmic; the sequence is SKKEGKAKFG…QIVEFNAANA (290 aa). Residues 36–65 form a disordered region; sequence GNKPLGKLDVDQGDKDSVEQERSFAPATED. Positions 41 to 57 are enriched in basic and acidic residues; it reads GKLDVDQGDKDSVEQER.

It belongs to the ZipA family. As to quaternary structure, interacts with FtsZ via their C-terminal domains.

It localises to the cell inner membrane. In terms of biological role, essential cell division protein that stabilizes the FtsZ protofilaments by cross-linking them and that serves as a cytoplasmic membrane anchor for the Z ring. Also required for the recruitment to the septal ring of downstream cell division proteins. In Vibrio parahaemolyticus serotype O3:K6 (strain RIMD 2210633), this protein is Cell division protein ZipA.